Here is a 132-residue protein sequence, read N- to C-terminus: Ribosome-binding factor A (132 aa).

This sequence belongs to the RbfA family. Monomer. Binds 30S ribosomal subunits, but not 50S ribosomal subunits or 70S ribosomes.

The protein localises to the cytoplasm. One of several proteins that assist in the late maturation steps of the functional core of the 30S ribosomal subunit. Associates with free 30S ribosomal subunits (but not with 30S subunits that are part of 70S ribosomes or polysomes). Required for efficient processing of 16S rRNA. May interact with the 5'-terminal helix region of 16S rRNA. This Prochlorococcus marinus (strain MIT 9515) protein is Ribosome-binding factor A.